Reading from the N-terminus, the 148-residue chain is UPF0756 membrane protein YeaL (148 aa).

The next 4 membrane-spanning stretches (helical) occupy residues 14-34, 51-71, 86-106, and 121-141; these read ALGF…LIIV, LSIG…SGTL, LVAI…VTLM, and VLGV…AGLV.

It belongs to the UPF0756 family.

The protein resides in the cell membrane. In Shigella flexneri, this protein is UPF0756 membrane protein YeaL.